The primary structure comprises 210 residues: Large ribosomal subunit protein uL4 (210 aa).

Residues glutamine 41 to lysine 52 show a composition bias toward polar residues. Positions glutamine 41–glycine 71 are disordered. A compositionally biased stretch (basic residues) spans glycine 60–glycine 71.

The protein belongs to the universal ribosomal protein uL4 family. As to quaternary structure, part of the 50S ribosomal subunit.

One of the primary rRNA binding proteins, this protein initially binds near the 5'-end of the 23S rRNA. It is important during the early stages of 50S assembly. It makes multiple contacts with different domains of the 23S rRNA in the assembled 50S subunit and ribosome. In terms of biological role, forms part of the polypeptide exit tunnel. The chain is Large ribosomal subunit protein uL4 from Trichormus variabilis (strain ATCC 29413 / PCC 7937) (Anabaena variabilis).